The sequence spans 277 residues: Orotidine 5'-phosphate decarboxylase (277 aa).

Substrate is bound by residues D40, 62–64, 93–102, Y229, and R247; these read KTH and DRKFIDIGNT. K95 serves as the catalytic Proton donor.

This sequence belongs to the OMP decarboxylase family.

The enzyme catalyses orotidine 5'-phosphate + H(+) = UMP + CO2. Its pathway is pyrimidine metabolism; UMP biosynthesis via de novo pathway; UMP from orotate: step 2/2. The protein is Orotidine 5'-phosphate decarboxylase (pyrG) of Aspergillus kawachii (White koji mold).